A 390-amino-acid chain; its full sequence is Chorismate synthase 1 (390 aa).

Positions 39 and 45 each coordinate NADP(+). The tract at residues 95–117 (EQEEKEMKRKVTKPRPGHADLNG) is disordered. Residues 132-134 (RSS), 253-254 (NA), Gly-298, 313-317 (KPIPT), and Arg-339 contribute to the FMN site.

The protein belongs to the chorismate synthase family. In terms of assembly, homotetramer. FMNH2 serves as cofactor.

The catalysed reaction is 5-O-(1-carboxyvinyl)-3-phosphoshikimate = chorismate + phosphate. It functions in the pathway metabolic intermediate biosynthesis; chorismate biosynthesis; chorismate from D-erythrose 4-phosphate and phosphoenolpyruvate: step 7/7. Its function is as follows. Catalyzes the anti-1,4-elimination of the C-3 phosphate and the C-6 proR hydrogen from 5-enolpyruvylshikimate-3-phosphate (EPSP) to yield chorismate, which is the branch point compound that serves as the starting substrate for the three terminal pathways of aromatic amino acid biosynthesis. This reaction introduces a second double bond into the aromatic ring system. This is Chorismate synthase 1 from Bacillus cereus (strain ATCC 10987 / NRS 248).